Consider the following 391-residue polypeptide: Xylose isomerase (391 aa).

Catalysis depends on residues His-54 and Asp-57. Residues Glu-181, Glu-217, His-220, Asp-245, Asp-255, Asp-257, and Asp-287 each coordinate Mg(2+).

This sequence belongs to the xylose isomerase family. Homotetramer. The cofactor is Mg(2+).

The protein resides in the cytoplasm. It carries out the reaction alpha-D-xylose = alpha-D-xylulofuranose. Functionally, involved in D-xylose catabolism. This chain is Xylose isomerase (xylA), found in Streptomyces albus G.